A 212-amino-acid chain; its full sequence is Imidazole glycerol phosphate synthase subunit HisH (212 aa).

Residues 3–212 enclose the Glutamine amidotransferase type-1 domain; the sequence is SIAVVDYGMG…LLSNFLKWTP (210 aa). Catalysis depends on Cys-82, which acts as the Nucleophile. Residues His-192 and Glu-194 contribute to the active site.

Heterodimer of HisH and HisF.

It localises to the cytoplasm. It carries out the reaction 5-[(5-phospho-1-deoxy-D-ribulos-1-ylimino)methylamino]-1-(5-phospho-beta-D-ribosyl)imidazole-4-carboxamide + L-glutamine = D-erythro-1-(imidazol-4-yl)glycerol 3-phosphate + 5-amino-1-(5-phospho-beta-D-ribosyl)imidazole-4-carboxamide + L-glutamate + H(+). The catalysed reaction is L-glutamine + H2O = L-glutamate + NH4(+). It functions in the pathway amino-acid biosynthesis; L-histidine biosynthesis; L-histidine from 5-phospho-alpha-D-ribose 1-diphosphate: step 5/9. Its function is as follows. IGPS catalyzes the conversion of PRFAR and glutamine to IGP, AICAR and glutamate. The HisH subunit catalyzes the hydrolysis of glutamine to glutamate and ammonia as part of the synthesis of IGP and AICAR. The resulting ammonia molecule is channeled to the active site of HisF. The chain is Imidazole glycerol phosphate synthase subunit HisH from Nitrosomonas europaea (strain ATCC 19718 / CIP 103999 / KCTC 2705 / NBRC 14298).